The sequence spans 275 residues: Uridine-5'-phosphate dioxygenase (275 aa).

Fe cation is bound by residues H105, D107, and H247.

Fe(2+) serves as cofactor.

The enzyme catalyses UMP + 2-oxoglutarate + O2 = uridine-5'-aldehyde + succinate + phosphate + CO2. Its pathway is antibiotic biosynthesis. Its activity is regulated as follows. Enhanced by ascorbic acid and inhibited by Zn(2+). Dioxygenase involved in the biosynthesis of the capuramycin-type nucleoside antibiotic A-102395. Catalyzes the dephosphorylation and oxidation of UMP to generate uridine-5'-aldehyde. Can also use the alternative alpha-keto acids pyruvate and alpha-ketoadipate (2-oxoadipate), with very low efficiency. Cannot use alpha-ketobutyrate, alpha-ketovalerate and oxaloacetate. This chain is Uridine-5'-phosphate dioxygenase, found in Amycolatopsis sp.